The primary structure comprises 318 residues: Deacetoxycephalosporin C hydroxylase (318 aa).

One can recognise a Fe2OG dioxygenase domain in the interval 158–271 (DADPVLRLRY…RTSSVFFLRP (114 aa)).

This sequence belongs to the iron/ascorbate-dependent oxidoreductase family. As to quaternary structure, monomer. The cofactor is Fe cation.

The catalysed reaction is deacetoxycephalosporin C + 2-oxoglutarate + O2 = deacetylcephalosporin C + succinate + CO2. It functions in the pathway antibiotic biosynthesis; cephalosporin C biosynthesis. Hydroxylation of desacetoxicephalosporin C in 3'position to form deacetylcephalosporin C. The chain is Deacetoxycephalosporin C hydroxylase (cefF) from Streptomyces clavuligerus.